We begin with the raw amino-acid sequence, 65 residues long: Large ribosomal subunit protein bL35 (65 aa).

Belongs to the bacterial ribosomal protein bL35 family.

The sequence is that of Large ribosomal subunit protein bL35 from Caldicellulosiruptor saccharolyticus (strain ATCC 43494 / DSM 8903 / Tp8T 6331).